A 160-amino-acid chain; its full sequence is Cyclic pyranopterin monophosphate synthase (160 aa).

Residues 75–77 and 113–114 contribute to the substrate site; these read LCH and ME. Residue Asp-128 is part of the active site.

The protein belongs to the MoaC family. In terms of assembly, homohexamer; trimer of dimers.

The enzyme catalyses (8S)-3',8-cyclo-7,8-dihydroguanosine 5'-triphosphate = cyclic pyranopterin phosphate + diphosphate. It functions in the pathway cofactor biosynthesis; molybdopterin biosynthesis. Catalyzes the conversion of (8S)-3',8-cyclo-7,8-dihydroguanosine 5'-triphosphate to cyclic pyranopterin monophosphate (cPMP). The polypeptide is Cyclic pyranopterin monophosphate synthase (Sodalis glossinidius (strain morsitans)).